The following is a 242-amino-acid chain: Polycomb group RING finger protein 3 (242 aa).

Residues 17–56 form an RING-type zinc finger; it reads CRLCSGYLIDATTVTECLHTFCRSCLVKYLEENNTCPTCR. The segment at 115–149 is disordered; sequence AKQHLDSHRNGETKADDSSNKEAAEEKPEEDNDYH. Residues 117 to 140 show a composition bias toward basic and acidic residues; that stretch reads QHLDSHRNGETKADDSSNKEAAEE. Residues 132–242 form an interaction with BCORL1 region; that stretch reads SSNKEAAEEK…LHYRPKMDLL (111 aa).

In terms of assembly, component of a PRC1-like complex that contains PCGF3, RNF2 and RYBP. Interacts with CBX6, CBX7 and CBX8. Interacts with BCORL1.

The protein resides in the nucleus. The protein localises to the nucleoplasm. Component of a Polycomb group (PcG) multiprotein PRC1-like complex, a complex class required to maintain the transcriptionally repressive state of many genes, including Hox genes, throughout development. PcG PRC1 complex acts via chromatin remodeling and modification of histones; it mediates monoubiquitination of histone H2A 'Lys-119', rendering chromatin heritably changed in its expressibility. Within the PRC1-like complex, regulates RNF2 ubiquitin ligase activity. Plays a redundant role with PCGF5 as part of a PRC1-like complex that mediates monoubiquitination of histone H2A 'Lys-119' on the X chromosome and is required for normal silencing of one copy of the X chromosome in XX females. This is Polycomb group RING finger protein 3 (PCGF3) from Homo sapiens (Human).